Reading from the N-terminus, the 225-residue chain is tRNA (guanine-N(1)-)-methyltransferase (225 aa).

Residues glycine 110 and 130-135 (VGDYVL) contribute to the S-adenosyl-L-methionine site.

The protein belongs to the RNA methyltransferase TrmD family. As to quaternary structure, homodimer.

Its subcellular location is the cytoplasm. It catalyses the reaction guanosine(37) in tRNA + S-adenosyl-L-methionine = N(1)-methylguanosine(37) in tRNA + S-adenosyl-L-homocysteine + H(+). In terms of biological role, specifically methylates guanosine-37 in various tRNAs. In Neorickettsia sennetsu (strain ATCC VR-367 / Miyayama) (Ehrlichia sennetsu), this protein is tRNA (guanine-N(1)-)-methyltransferase.